The sequence spans 410 residues: Tryptophan synthase beta chain (410 aa).

K100 carries the post-translational modification N6-(pyridoxal phosphate)lysine.

This sequence belongs to the TrpB family. Tetramer of two alpha and two beta chains. Pyridoxal 5'-phosphate is required as a cofactor.

It catalyses the reaction (1S,2R)-1-C-(indol-3-yl)glycerol 3-phosphate + L-serine = D-glyceraldehyde 3-phosphate + L-tryptophan + H2O. The protein operates within amino-acid biosynthesis; L-tryptophan biosynthesis; L-tryptophan from chorismate: step 5/5. Functionally, the beta subunit is responsible for the synthesis of L-tryptophan from indole and L-serine. This is Tryptophan synthase beta chain from Pyrobaculum aerophilum (strain ATCC 51768 / DSM 7523 / JCM 9630 / CIP 104966 / NBRC 100827 / IM2).